Reading from the N-terminus, the 71-residue chain is DNA gyrase inhibitor YacG (71 aa).

Zn(2+) contacts are provided by Cys-9, Cys-12, Cys-28, and Cys-32. The disordered stretch occupies residues 43–71; that stretch reads EEKRIPSQSESNDSDEWSEMPEQDPKPFN. Residues 54 to 64 are compositionally biased toward acidic residues; it reads NDSDEWSEMPE.

The protein belongs to the DNA gyrase inhibitor YacG family. Interacts with GyrB. The cofactor is Zn(2+).

Inhibits all the catalytic activities of DNA gyrase by preventing its interaction with DNA. Acts by binding directly to the C-terminal domain of GyrB, which probably disrupts DNA binding by the gyrase. The protein is DNA gyrase inhibitor YacG of Proteus mirabilis (strain HI4320).